Consider the following 221-residue polypeptide: Interleukin-12 subunit alpha (221 aa).

Positions 1 to 25 are cleaved as a signal peptide; it reads MCPLRSLLLISTLVLLHHLPHLSLG. Disulfide bonds link C39–C112, C66–C198, and C87–C125. N95 is a glycosylation site (N-linked (GlcNAc...) asparagine).

It belongs to the IL-6 superfamily. In terms of assembly, heterodimer with IL12B; disulfide-linked. This heterodimer is known as interleukin IL-12. Heterodimer with EBI3/IL27B; not disulfide-linked. This heterodimer is known as interleukin IL-35. Interacts with NBR1; this interaction promotes IL-12 secretion.

Its subcellular location is the secreted. Functionally, heterodimerizes with IL12B to form the IL-12 cytokine or with EBI3/IL27B to form the IL-35 cytokine. IL-12 is primarily produced by professional antigen-presenting cells (APCs) such as B-cells and dendritic cells (DCs) as well as macrophages and granulocytes and regulates T-cell and natural killer-cell responses, induces the production of interferon-gamma (IFN-gamma), favors the differentiation of T-helper 1 (Th1) cells and is an important link between innate resistance and adaptive immunity. Mechanistically, exerts its biological effects through a receptor composed of IL12R1 and IL12R2 subunits. Binding to the receptor results in the rapid tyrosine phosphorylation of a number of cellular substrates including the JAK family kinases TYK2 and JAK2. In turn, recruited STAT4 gets phosphorylated and translocates to the nucleus where it regulates cytokine/growth factor responsive genes. As part of IL-35, plays essential roles in maintaining the immune homeostasis of the liver microenvironment and also functions as an immune-suppressive cytokine. Mediates biological events through unconventional receptors composed of IL12RB2 and gp130/IL6ST heterodimers or homodimers. Signaling requires the transcription factors STAT1 and STAT4, which form a unique heterodimer that binds to distinct DNA sites. In Ovis aries (Sheep), this protein is Interleukin-12 subunit alpha (IL12A).